The chain runs to 252 residues: Protein UL24 homolog (252 aa).

Residues 215–252 are disordered; that stretch reads SVLTKTSGENRSRASRQVAKNAPKNRIRRTAKKDAKRQ. Residues 237-252 show a composition bias toward basic residues; the sequence is PKNRIRRTAKKDAKRQ.

This sequence belongs to the herpesviridae UL24 family.

The protein resides in the virion. It localises to the host cytoplasm. It is found in the host nucleus. Its subcellular location is the host nucleolus. The protein localises to the host Golgi apparatus. Functionally, may participate in nuclear egress of viral particles. Plays a role in the dispersal of several host nucleolar proteins including NCL/nucleolin and NPM1. Since deletion of host NCL/nucleolin negatively impact on nuclear egress, UL24 supposedly acts on this process through its effect on host nucleoli. The chain is Protein UL24 homolog (U49) from Homo sapiens (Human).